We begin with the raw amino-acid sequence, 363 residues long: MDNYTYSELLKSLQNKCDNIALIIKPEKIKQELERIEKEQEDPNFWQDVLKARDTNKEKVRLNRLLETYQKTKNSLDESVELFELAQNDNDETTLSLLYEEAPTLEHSVQKVEIEIMLSGENDASNAIITIQPGAGGTESQDWASILYRMYLRWAERRGFKSEILDYQDGEEAGIKGVAFIIKGENAYGYLKNENGVHRLVRISPFDANAKRHTSFASVQISPELDDDIDIEIDEKDVRYDYYRASGAGGQHVNKTESAVRITHFPTGIVVQCQNDRSQHKNKASALKMLKSKLYELELEKQQSSAKNEEKSEIGWGHQIRSYVLAPYQQVKDARSNIAYSNVEAILDGDIDAILEGVLIAKA.

Q251 bears the N5-methylglutamine mark.

It belongs to the prokaryotic/mitochondrial release factor family. In terms of processing, methylated by PrmC. Methylation increases the termination efficiency of RF2.

It is found in the cytoplasm. In terms of biological role, peptide chain release factor 2 directs the termination of translation in response to the peptide chain termination codons UGA and UAA. This chain is Peptide chain release factor 2, found in Helicobacter pylori (strain G27).